Here is a 93-residue protein sequence, read N- to C-terminus: Integration host factor subunit beta (93 aa).

Belongs to the bacterial histone-like protein family. In terms of assembly, heterodimer of an alpha and a beta chain.

Functionally, this protein is one of the two subunits of integration host factor, a specific DNA-binding protein that functions in genetic recombination as well as in transcriptional and translational control. In Haemophilus ducreyi (strain 35000HP / ATCC 700724), this protein is Integration host factor subunit beta.